The following is a 422-amino-acid chain: Serine protease HTRA2, mitochondrial (422 aa).

A mitochondrion-targeting transit peptide spans Met-1–Ile-17. Positions Ala-18–Gly-74 are excised as a propeptide. Residues Ser-24–Arg-56 form a disordered region. Residues Pro-41–Gln-51 show a composition bias toward polar residues. The helical transmembrane segment at Leu-64–Ile-82 threads the bilayer. 2 short sequence motifs (IAP-binding) span residues Ala-75–Ser-78 and Ser-94–Thr-97. Positions Ser-139 to Leu-302 are serine protease. Catalysis depends on charge relay system residues His-157, Asp-189, and Ser-266. In terms of domain architecture, PDZ spans Met-325 to Val-410.

It belongs to the peptidase S1C family. Interacts with th/DIAP1 (via BIR 2 domain).

Its subcellular location is the mitochondrion intermembrane space. It localises to the mitochondrion membrane. It catalyses the reaction Cleavage of non-polar aliphatic amino-acids at the P1 position, with a preference for Val, Ile and Met. At the P2 and P3 positions, Arg is selected most strongly with a secondary preference for other hydrophilic residues.. Its function is as follows. Serine protease that shows proteolytic activity against a non-specific substrate beta-casein. Promotes or induces cell death either by direct binding to and inhibition of BIRC proteins (also called inhibitor of apoptosis proteins, IAPs), leading to an increase in caspase activity, or by a BIRC inhibition-independent, caspase-independent and serine protease activity-dependent mechanism. Can antagonize antiapoptotic activity of th/Diap1 by directly inducing the degradation of th/Diap1. The sequence is that of Serine protease HTRA2, mitochondrial from Drosophila erecta (Fruit fly).